The chain runs to 122 residues: uncharacterized protein (122 aa).

Over residues 1 to 10 (MGTGLRSQSL) the composition is skewed to polar residues. Positions 1–68 (MGTGLRSQSL…GQEWLPGSLG (68 aa)) are disordered. The segment covering 40–56 (QGREKSRSSDGGPERLD) has biased composition (basic and acidic residues).

This is an uncharacterized protein from Bos taurus (Bovine).